The primary structure comprises 518 residues: uncharacterized protein (518 aa).

The N-terminal stretch at 1 to 21 (MWKWKVILLFLAEMFVSGVNG) is a signal peptide. N-linked (GlcNAc...) asparagine glycans are attached at residues Asn30, Asn142, Asn295, Asn342, Asn362, Asn410, and Asn503. One can recognise a CUB domain in the interval 389 to 517 (CPPFGITNSV…RGFWVSITPQ (129 aa)).

The protein localises to the secreted. This is an uncharacterized protein from Caenorhabditis elegans.